We begin with the raw amino-acid sequence, 122 residues long: Large ribosomal subunit protein uL14 (122 aa).

This sequence belongs to the universal ribosomal protein uL14 family. In terms of assembly, part of the 50S ribosomal subunit. Forms a cluster with proteins L3 and L19. In the 70S ribosome, L14 and L19 interact and together make contacts with the 16S rRNA in bridges B5 and B8.

Functionally, binds to 23S rRNA. Forms part of two intersubunit bridges in the 70S ribosome. The polypeptide is Large ribosomal subunit protein uL14 (Rickettsia rickettsii (strain Iowa)).